A 229-amino-acid chain; its full sequence is Cytochrome c oxidase subunit 2 (229 aa).

Over Met-1 to Ser-14 the chain is Mitochondrial intermembrane. The chain crosses the membrane as a helical span at residues Pro-15–Leu-45. Residues Leu-46 to Gln-59 are Mitochondrial matrix-facing. A helical transmembrane segment spans residues Glu-60–Met-87. At Asp-88–Ser-229 the chain is on the mitochondrial intermembrane side. 6 residues coordinate Cu cation: His-161, Cys-196, Glu-198, Cys-200, His-204, and Met-207. A Mg(2+)-binding site is contributed by Glu-198.

The protein belongs to the cytochrome c oxidase subunit 2 family. In terms of assembly, component of the cytochrome c oxidase (complex IV, CIV), a multisubunit enzyme composed of 14 subunits. The complex is composed of a catalytic core of 3 subunits MT-CO1, MT-CO2 and MT-CO3, encoded in the mitochondrial DNA, and 11 supernumerary subunits COX4I, COX5A, COX5B, COX6A, COX6B, COX6C, COX7A, COX7B, COX7C, COX8 and NDUFA4, which are encoded in the nuclear genome. The complex exists as a monomer or a dimer and forms supercomplexes (SCs) in the inner mitochondrial membrane with NADH-ubiquinone oxidoreductase (complex I, CI) and ubiquinol-cytochrome c oxidoreductase (cytochrome b-c1 complex, complex III, CIII), resulting in different assemblies (supercomplex SCI(1)III(2)IV(1) and megacomplex MCI(2)III(2)IV(2)). Found in a complex with TMEM177, COA6, COX18, COX20, SCO1 and SCO2. Interacts with TMEM177 in a COX20-dependent manner. Interacts with COX20. Interacts with COX16. It depends on Cu cation as a cofactor.

It is found in the mitochondrion inner membrane. It carries out the reaction 4 Fe(II)-[cytochrome c] + O2 + 8 H(+)(in) = 4 Fe(III)-[cytochrome c] + 2 H2O + 4 H(+)(out). Component of the cytochrome c oxidase, the last enzyme in the mitochondrial electron transport chain which drives oxidative phosphorylation. The respiratory chain contains 3 multisubunit complexes succinate dehydrogenase (complex II, CII), ubiquinol-cytochrome c oxidoreductase (cytochrome b-c1 complex, complex III, CIII) and cytochrome c oxidase (complex IV, CIV), that cooperate to transfer electrons derived from NADH and succinate to molecular oxygen, creating an electrochemical gradient over the inner membrane that drives transmembrane transport and the ATP synthase. Cytochrome c oxidase is the component of the respiratory chain that catalyzes the reduction of oxygen to water. Electrons originating from reduced cytochrome c in the intermembrane space (IMS) are transferred via the dinuclear copper A center (CU(A)) of subunit 2 and heme A of subunit 1 to the active site in subunit 1, a binuclear center (BNC) formed by heme A3 and copper B (CU(B)). The BNC reduces molecular oxygen to 2 water molecules using 4 electrons from cytochrome c in the IMS and 4 protons from the mitochondrial matrix. In Alligator mississippiensis (American alligator), this protein is Cytochrome c oxidase subunit 2 (MT-CO2).